Consider the following 546-residue polypeptide: MAAKDVVFGDSARAKMVEGVNILANAVKVTLGPKGRNVVLERSFGGPTVTKDGVSVAKEIELKDKLQNMGAQMVKEVASKTSDNAGDGTTTATVLAQSIVREGMKYVASGMNPMDLKRGIDKAVAAAVEELKKISKPCTTNKEIAQVGAISANSDSSIGDRIAEAMDKVGKEGVITVEDGKSLADELDVVEGMQFDRGYLSPYFINNPDKQVAVLENPFVLLHDKKVSNIRDLLPVLEQVAKAGRPLLIIAEDVEGEALATLVVNNIRGILKTVAVKAPGFGDRRKAMLEDIAILTGGQVIAEETGLTLEKATLAELGQAKRIEVGKENTTIIDGAGEAVNIEARVKQIRTQIEEATSDYDREKLQERVAKLAGGVAVIKVGAATEVEMKEKKARVEDALHATRAAVEEGIVPGGGVALIRARTAIASLTGVNADQNAGIKIVLRAMEEPLRQIVTNGGEEASVVVAAVAAGKGNYGYNAATGEYVDMVEAGVVDPTKVTRTALQNAASVAGLLLTTDAAVAELPKEDAPMPGGMPGGMGGMGMDM.

ATP contacts are provided by residues 30 to 33, Lys-51, 87 to 91, Gly-415, 479 to 481, and Asp-495; these read TLGP, DGTTT, and NAA. The disordered stretch occupies residues 526–546; sequence KEDAPMPGGMPGGMGGMGMDM. Over residues 534–546 the composition is skewed to gly residues; the sequence is GMPGGMGGMGMDM.

The protein belongs to the chaperonin (HSP60) family. Forms a cylinder of 14 subunits composed of two heptameric rings stacked back-to-back. Interacts with the co-chaperonin GroES.

Its subcellular location is the cytoplasm. It catalyses the reaction ATP + H2O + a folded polypeptide = ADP + phosphate + an unfolded polypeptide.. In terms of biological role, together with its co-chaperonin GroES, plays an essential role in assisting protein folding. The GroEL-GroES system forms a nano-cage that allows encapsulation of the non-native substrate proteins and provides a physical environment optimized to promote and accelerate protein folding. The protein is Chaperonin GroEL 1 of Burkholderia pseudomallei (strain 1106a).